A 245-amino-acid chain; its full sequence is Bis(5'-nucleosyl)-tetraphosphatase PrpE [asymmetrical] (245 aa).

Belongs to the PrpE family. Ni(2+) serves as cofactor.

The catalysed reaction is P(1),P(4)-bis(5'-guanosyl) tetraphosphate + H2O = GMP + GTP + 2 H(+). Asymmetrically hydrolyzes Ap4p to yield AMP and ATP. In Anoxybacillus flavithermus (strain DSM 21510 / WK1), this protein is Bis(5'-nucleosyl)-tetraphosphatase PrpE [asymmetrical].